Reading from the N-terminus, the 324-residue chain is UDP-N-acetylenolpyruvoylglucosamine reductase (324 aa).

The FAD-binding PCMH-type domain maps to 39–220 (RTGGLAELFY…RAAMHEVALH (182 aa)). Arg185 is an active-site residue. Ser234 functions as the Proton donor in the catalytic mechanism. Glu304 is an active-site residue.

The protein belongs to the MurB family. FAD serves as cofactor.

The protein localises to the cytoplasm. The catalysed reaction is UDP-N-acetyl-alpha-D-muramate + NADP(+) = UDP-N-acetyl-3-O-(1-carboxyvinyl)-alpha-D-glucosamine + NADPH + H(+). Its pathway is cell wall biogenesis; peptidoglycan biosynthesis. Its function is as follows. Cell wall formation. This is UDP-N-acetylenolpyruvoylglucosamine reductase from Bartonella bacilliformis (strain ATCC 35685 / KC583 / Herrer 020/F12,63).